The primary structure comprises 166 residues: CDP-archaeol synthase (166 aa).

5 consecutive transmembrane segments (helical) span residues Met-1 to Asn-21, Leu-55 to Ile-75, Ile-78 to Ile-98, Ala-110 to Lys-130, and Ile-131 to Leu-151.

Belongs to the CDP-archaeol synthase family. It depends on Mg(2+) as a cofactor.

The protein resides in the cell membrane. It carries out the reaction 2,3-bis-O-(geranylgeranyl)-sn-glycerol 1-phosphate + CTP + H(+) = CDP-2,3-bis-O-(geranylgeranyl)-sn-glycerol + diphosphate. It participates in membrane lipid metabolism; glycerophospholipid metabolism. Functionally, catalyzes the formation of CDP-2,3-bis-(O-geranylgeranyl)-sn-glycerol (CDP-archaeol) from 2,3-bis-(O-geranylgeranyl)-sn-glycerol 1-phosphate (DGGGP) and CTP. This reaction is the third ether-bond-formation step in the biosynthesis of archaeal membrane lipids. In Sulfurisphaera tokodaii (strain DSM 16993 / JCM 10545 / NBRC 100140 / 7) (Sulfolobus tokodaii), this protein is CDP-archaeol synthase.